Here is a 948-residue protein sequence, read N- to C-terminus: Putative helicase 009L (948 aa).

The Helicase ATP-binding domain occupies 64–243 (LSEDTPYREL…ADVLNLILPQ (180 aa)). 77–84 (HAPGTGKT) lines the ATP pocket. A DEAH box motif is present at residues 187 to 190 (DEVH). The region spanning 371-554 (VKYDYLVRVA…AVERILMTSA (184 aa)) is the Helicase C-terminal domain.

In Frog virus 3 (isolate Goorha) (FV-3), this protein is Putative helicase 009L.